A 570-amino-acid polypeptide reads, in one-letter code: Formate--tetrahydrofolate ligase (570 aa).

Residue 65–72 participates in ATP binding; that stretch reads TPYGEGKT.

It belongs to the formate--tetrahydrofolate ligase family.

The enzyme catalyses (6S)-5,6,7,8-tetrahydrofolate + formate + ATP = (6R)-10-formyltetrahydrofolate + ADP + phosphate. Its pathway is one-carbon metabolism; tetrahydrofolate interconversion. The sequence is that of Formate--tetrahydrofolate ligase from Shewanella piezotolerans (strain WP3 / JCM 13877).